Reading from the N-terminus, the 380-residue chain is Rab9 effector protein with kelch motifs (380 aa).

6 Kelch repeats span residues 57–103, 108–154, 159–211, 212–258, 262–311, and 357–380; these read KIFI…FLPS, SIWV…TSSA, QLYV…AAGT, KLFI…AAVA, HVYM…VIPW, and LCFV…TVVD.

As to quaternary structure, interacts with PIKFYVE; the interaction recruits RABEPK to the endosomal membrane. Interacts with RAB9 in its GTP-bound conformation. In terms of processing, phosphorylated on Ser residues by PIKFYVE.

The protein resides in the cytoplasm. It is found in the endosome membrane. Its function is as follows. Rab9 effector required for endosome to trans-Golgi network (TGN) transport. The polypeptide is Rab9 effector protein with kelch motifs (Mus musculus (Mouse)).